We begin with the raw amino-acid sequence, 479 residues long: Octopamine receptor (479 aa).

Topologically, residues 1–57 (MGQAATHDANNYTSINYTEIYDVIEDEKDVCAVADEPNIPCSFGISLAVPEWEAICT) are extracellular. Asn-11 and Asn-16 each carry an N-linked (GlcNAc...) asparagine glycan. A helical membrane pass occupies residues 58-80 (AIILTMIIISTVVGNILVILSVF). Residues 81–90 (TYKPLRIVQN) lie on the Cytoplasmic side of the membrane. A helical transmembrane segment spans residues 91 to 112 (FFIVSLAVADLTVAILVLPLNV). The Extracellular segment spans residues 113–129 (AYSILGQWVFGIYVCKM). A helical transmembrane segment spans residues 130 to 150 (WLTCDIMCCTSSILNLCAIAL). The Cytoplasmic portion of the chain corresponds to 151-170 (DRYWAITDPINYAQKRTLER). Residues 171–193 (VLFMIGIVWILSLVISSPPLLGW) form a helical membrane-spanning segment. The Extracellular portion of the chain corresponds to 194–218 (NDWPEVFEPDTPCRLTSQPGFVIFS). Residues 219–240 (SSGSFYIPLVIMTVVYFEIYLA) traverse the membrane as a helical segment. At 241–407 (TKKRLRDRAK…LTRERRAART (167 aa)) the chain is on the cytoplasmic side. The disordered stretch occupies residues 260–319 (GRNKYETKESDPNDQDSVSSDANPNEHQGGTRLVAENEKKHRTRKLTPKKKPKRRYWSKD). Over residues 274–287 (QDSVSSDANPNEHQ) the composition is skewed to polar residues. Residues 299–315 (KHRTRKLTPKKKPKRRY) are compositionally biased toward basic residues. A helical transmembrane segment spans residues 408 to 429 (LGIIMGVFVVCWLPFFVIYLVI). Over 430–441 (PFCVSCCLSNKF) the chain is Extracellular. Residues 442–462 (INFITWLGYVNSALNPLIYTI) traverse the membrane as a helical segment. Residues 463 to 479 (FNMDFRRAFKKLLFIKC) lie on the Cytoplasmic side of the membrane.

It belongs to the G-protein coupled receptor 1 family.

Its subcellular location is the cell membrane. In terms of biological role, receptor for octopamine. Octopamine (OA) is a neurotransmitter, neurohormone, and neuromodulator in invertebrates. The activity of this receptor is mediated by G proteins which activate adenylyl cyclase. The protein is Octopamine receptor of Bombyx mori (Silk moth).